Reading from the N-terminus, the 92-residue chain is Small ribosomal subunit protein uS19 (92 aa).

Belongs to the universal ribosomal protein uS19 family.

In terms of biological role, protein S19 forms a complex with S13 that binds strongly to the 16S ribosomal RNA. The sequence is that of Small ribosomal subunit protein uS19 from Streptococcus pyogenes serotype M49 (strain NZ131).